A 273-amino-acid chain; its full sequence is Type II restriction enzyme HgiCII (273 aa).

It belongs to the TdeIII type II restriction endonuclease family.

The enzyme catalyses Endonucleolytic cleavage of DNA to give specific double-stranded fragments with terminal 5'-phosphates.. Functionally, a P subtype restriction enzyme that recognizes the double-stranded sequence 5'-GGWCC-3' and cleaves after G-1. This Herpetosiphon aurantiacus (Herpetosiphon giganteus) protein is Type II restriction enzyme HgiCII.